The chain runs to 206 residues: MDTPTKSRRANGSIAFPEDFKPVKRNIQSELNQELETCLFSFRDKEYSAEKFSGIVFREMGWKDFDRLDKERISLYWVDQVIHGVTGVLWSPGGYEDKENYFGSSLNFLKPSFKSPTAIVSQNGDVKVTYWFNDLKNKKVIQLQVIFDTNGDIKSRTILSSGDSQFYTGLSVIVGGATALALGLFFLRNKKFVTPVLRIASSKFKN.

The chain crosses the membrane as a helical span at residues 166 to 186 (FYTGLSVIVGGATALALGLFF).

It is found in the membrane. This is an uncharacterized protein from Dictyostelium discoideum (Social amoeba).